A 32-amino-acid polypeptide reads, in one-letter code: uncharacterized protein (32 aa).

This is an uncharacterized protein from Saccharolobus islandicus (Sulfolobus islandicus).